The following is a 735-amino-acid chain: Ion-translocating oxidoreductase complex subunit C (735 aa).

4Fe-4S ferredoxin-type domains lie at 368–397 (MGAP…QQLY) and 407–436 (KATA…VQYF). The [4Fe-4S] cluster site is built by Cys-377, Cys-380, Cys-383, Cys-387, Cys-416, Cys-419, Cys-422, and Cys-426. The tract at residues 534–711 (QARAKQAAHP…EPVEPADPRK (178 aa)) is disordered.

The protein belongs to the 4Fe4S bacterial-type ferredoxin family. RnfC subfamily. In terms of assembly, the complex is composed of six subunits: RsxA, RsxB, RsxC, RsxD, RsxE and RsxG. Requires [4Fe-4S] cluster as cofactor.

It localises to the cell inner membrane. Its function is as follows. Part of a membrane-bound complex that couples electron transfer with translocation of ions across the membrane. Required to maintain the reduced state of SoxR. The sequence is that of Ion-translocating oxidoreductase complex subunit C from Salmonella paratyphi A (strain ATCC 9150 / SARB42).